A 64-amino-acid chain; its full sequence is Alpha-mammal toxin BmK-M8 (64 aa).

The LCN-type CS-alpha/beta domain maps to 2-64 (RDAYIADSEN…ERIKEPGKCG (63 aa)). 4 disulfides stabilise this stretch: Cys12–Cys63, Cys16–Cys36, Cys22–Cys46, and Cys26–Cys48.

Belongs to the long (4 C-C) scorpion toxin superfamily. Sodium channel inhibitor family. Alpha subfamily. In terms of tissue distribution, expressed by the venom gland.

Its subcellular location is the secreted. Alpha toxins bind voltage-independently at site-3 of sodium channels (Nav) and inhibit the inactivation of the activated channels, thereby blocking neuronal transmission. This acidic toxin has a weak toxicity and is active against mammals. The polypeptide is Alpha-mammal toxin BmK-M8 (Olivierus martensii (Manchurian scorpion)).